A 686-amino-acid polypeptide reads, in one-letter code: Polyribonucleotide nucleotidyltransferase (686 aa).

Mg(2+)-binding residues include D478 and D484. In terms of domain architecture, KH spans 545–604 (PRVEVIQIPTDKIGLLIGPGGKTINALQDEYGVNISVENDGTVYVAGVEGMSVKAAVSAI). Positions 614–684 (GDIYVGKVVK…KQNRISLEMV (71 aa)) constitute an S1 motif domain.

Belongs to the polyribonucleotide nucleotidyltransferase family. Requires Mg(2+) as cofactor.

Its subcellular location is the cytoplasm. It carries out the reaction RNA(n+1) + phosphate = RNA(n) + a ribonucleoside 5'-diphosphate. Involved in mRNA degradation. Catalyzes the phosphorolysis of single-stranded polyribonucleotides processively in the 3'- to 5'-direction. In Rubrobacter xylanophilus (strain DSM 9941 / JCM 11954 / NBRC 16129 / PRD-1), this protein is Polyribonucleotide nucleotidyltransferase.